The sequence spans 426 residues: Serine--tRNA ligase (426 aa).

233–235 provides a ligand contact to L-serine; the sequence is TAE. 264–266 is an ATP binding site; sequence RSE. Glu287 contributes to the L-serine binding site. Residue 351–354 participates in ATP binding; that stretch reads EISS. Ser387 is an L-serine binding site.

The protein belongs to the class-II aminoacyl-tRNA synthetase family. Type-1 seryl-tRNA synthetase subfamily. As to quaternary structure, homodimer. The tRNA molecule binds across the dimer.

It localises to the cytoplasm. It carries out the reaction tRNA(Ser) + L-serine + ATP = L-seryl-tRNA(Ser) + AMP + diphosphate + H(+). It catalyses the reaction tRNA(Sec) + L-serine + ATP = L-seryl-tRNA(Sec) + AMP + diphosphate + H(+). The protein operates within aminoacyl-tRNA biosynthesis; selenocysteinyl-tRNA(Sec) biosynthesis; L-seryl-tRNA(Sec) from L-serine and tRNA(Sec): step 1/1. Catalyzes the attachment of serine to tRNA(Ser). Is also able to aminoacylate tRNA(Sec) with serine, to form the misacylated tRNA L-seryl-tRNA(Sec), which will be further converted into selenocysteinyl-tRNA(Sec). This chain is Serine--tRNA ligase, found in Clostridium botulinum (strain Langeland / NCTC 10281 / Type F).